A 199-amino-acid chain; its full sequence is Glycerol-3-phosphate acyltransferase (199 aa).

5 helical membrane passes run 3–23 (AAVWTLLLAYLFGSIPAGVLV), 50–70 (WGPALVVAFFDVFKGGIAVLV), 78–98 (DWMLGGVALMAVLGHNYSVFL), 113–133 (LLFLDPALALWTFPIGLSVIL), and 154–174 (LALGRPLWEVATVFLMALLIF).

Belongs to the PlsY family. Probably interacts with PlsX.

It is found in the cell inner membrane. It catalyses the reaction an acyl phosphate + sn-glycerol 3-phosphate = a 1-acyl-sn-glycero-3-phosphate + phosphate. The protein operates within lipid metabolism; phospholipid metabolism. Functionally, catalyzes the transfer of an acyl group from acyl-phosphate (acyl-PO(4)) to glycerol-3-phosphate (G3P) to form lysophosphatidic acid (LPA). This enzyme utilizes acyl-phosphate as fatty acyl donor, but not acyl-CoA or acyl-ACP. The polypeptide is Glycerol-3-phosphate acyltransferase (Thermus thermophilus (strain ATCC BAA-163 / DSM 7039 / HB27)).